Reading from the N-terminus, the 165-residue chain is Endoribonuclease YbeY (165 aa).

Positions 130, 134, and 140 each coordinate Zn(2+).

The protein belongs to the endoribonuclease YbeY family. Zn(2+) is required as a cofactor.

The protein resides in the cytoplasm. In terms of biological role, single strand-specific metallo-endoribonuclease involved in late-stage 70S ribosome quality control and in maturation of the 3' terminus of the 16S rRNA. This is Endoribonuclease YbeY from Streptococcus suis (strain 98HAH33).